We begin with the raw amino-acid sequence, 226 residues long: 2-C-methyl-D-erythritol 4-phosphate cytidylyltransferase (226 aa).

Belongs to the IspD/TarI cytidylyltransferase family. IspD subfamily.

The catalysed reaction is 2-C-methyl-D-erythritol 4-phosphate + CTP + H(+) = 4-CDP-2-C-methyl-D-erythritol + diphosphate. Its pathway is isoprenoid biosynthesis; isopentenyl diphosphate biosynthesis via DXP pathway; isopentenyl diphosphate from 1-deoxy-D-xylulose 5-phosphate: step 2/6. Catalyzes the formation of 4-diphosphocytidyl-2-C-methyl-D-erythritol from CTP and 2-C-methyl-D-erythritol 4-phosphate (MEP). The sequence is that of 2-C-methyl-D-erythritol 4-phosphate cytidylyltransferase from Rhodococcus jostii (strain RHA1).